The following is a 1578-amino-acid chain: Neurexin-3 (1578 aa).

The first 27 residues, 1 to 27 (MSFTLHSVFFTLKVSSFLGSLVGLCLG), serve as a signal peptide directing secretion. Residues 28-202 (LEFMGLPNQW…SVQLEAEGPC (175 aa)) form the Laminin G-like 1 domain. Residues 28 to 1503 (LEFMGLPNQW…EVIRESNSTT (1476 aa)) are Extracellular-facing. Asn58 and Asn105 each carry an N-linked (GlcNAc...) asparagine glycan. The EGF-like 1 domain maps to 198 to 235 (AEGPCGERPCENGGICFLLDGHPTCDCSTTGYGGTLCS). Disulfide bonds link Cys202-Cys213, Cys207-Cys222, and Cys224-Cys234. Laminin G-like domains are found at residues 260–444 (ENVA…VFKC) and 451–643 (DPIN…KSSC). The Ca(2+) site is built by Asp308, Leu325, and Met378. 5 cysteine pairs are disulfide-bonded: Cys408–Cys444, Cys614–Cys643, Cys651–Cys662, Cys656–Cys671, and Cys673–Cys683. The EGF-like 2 domain occupies 647–684 (SAKQCDSYPCKNNAVCKDGWNRFICDCTGTGYWGRTCE). Laminin G-like domains are found at residues 689-861 (ILSY…IDYC) and 875-1050 (DPVT…DRGC). Ca(2+) is bound by residues Asp736 and Leu753. A glycan (N-linked (GlcNAc...) asparagine) is linked at Asn761. Arg811 provides a ligand contact to Ca(2+). 4 cysteine pairs are disulfide-bonded: Cys1022/Cys1050, Cys1057/Cys1068, Cys1062/Cys1077, and Cys1079/Cys1089. An EGF-like 3 domain is found at 1053-1090 (PSTTCQEDSCANQGVCMQQWEGFTCDCSMTSYSGNQCN). Positions 1094–1294 (ATYIFGKSGG…NPNIKINGSV (201 aa)) constitute a Laminin G-like 6 domain. Ca(2+)-binding residues include Asp1146 and Ile1163. N-linked (GlcNAc...) asparagine glycosylation occurs at Asn1193. Ca(2+)-binding residues include Ile1245 and Asn1247. Residues Asn1291 and Asn1335 are each glycosylated (N-linked (GlcNAc...) asparagine). Residues 1328 to 1352 (ATTTTRKNRSTASIQPTSDDLVSSA) form a disordered region. Positions 1337-1352 (STASIQPTSDDLVSSA) are enriched in polar residues. A glycan (O-linked (Xyl...) (heparan sulfate) serine) is linked at Ser1351. A glycan (N-linked (GlcNAc...) asparagine) is linked at Asn1500. The chain crosses the membrane as a helical span at residues 1504–1524 (GMVVGIVAAAALCILILLYAM). Residues 1525 to 1578 (YKYRNRDEGSYQVDETRNYISNSAQSNGTLMKEKQASSKSGHKKQKNKDKEYYV) are Cytoplasmic-facing. The tract at residues 1546-1578 (NSAQSNGTLMKEKQASSKSGHKKQKNKDKEYYV) is disordered.

It belongs to the neurexin family. As to quaternary structure, the laminin G-like domain 2 binds to NXPH1. Isoform 8/alpha-4B binds to alpha-dystroglycan. The cytoplasmic C-terminal region binds to CASK. Specific isoforms bind neuroligins NLGN1, NLGN2 and NLGN3. Interacts with CLSTN3. Post-translationally, O-glycosylated; contains heparan sulfate. Heparan sulfate attachment is required for synapse development by mediating interactions with neuroligins. As to expression, brain.

It is found in the presynaptic cell membrane. Functionally, neuronal cell surface protein that may be involved in cell recognition and cell adhesion. May mediate intracellular signaling. The polypeptide is Neurexin-3 (Nrxn3) (Rattus norvegicus (Rat)).